Consider the following 1057-residue polypeptide: Carbamoyl phosphate synthase large chain (1057 aa).

The tract at residues 1-401 (MPKRNDIKTI…SLLKAIRSLE (401 aa)) is carboxyphosphate synthetic domain. The ATP site is built by Arg129, Arg169, Gly175, Gly176, Lys208, Ile210, Glu215, Gly241, Ile242, His243, Gln284, and Glu298. An ATP-grasp 1 domain is found at 133–327 (RTLMNDLNVP…IAKLAAKIAV (195 aa)). Positions 284, 298, and 300 each coordinate Mg(2+). 3 residues coordinate Mn(2+): Gln284, Glu298, and Asn300. The interval 402–546 (YGVHHLGLPN…YGTYETENES (145 aa)) is oligomerization domain. Residues 547–929 (IVTDKEKILV…ALFKGLTGSG (383 aa)) form a carbamoyl phosphate synthetic domain region. The region spanning 671–861 (EALLRKINVP…MAQLAMRAII (191 aa)) is the ATP-grasp 2 domain. Residues Arg707, Arg746, Leu748, Glu752, Gly777, Val778, His779, Ser780, Gln820, and Glu832 each coordinate ATP. 3 residues coordinate Mg(2+): Gln820, Glu832, and Asn834. Residues Gln820, Glu832, and Asn834 each contribute to the Mn(2+) site. The MGS-like domain occupies 930 to 1057 (VEVKDHGTVL…ESMTFTMRQM (128 aa)). The segment at 930 to 1057 (VEVKDHGTVL…ESMTFTMRQM (128 aa)) is allosteric domain.

The protein belongs to the CarB family. As to quaternary structure, composed of two chains; the small (or glutamine) chain promotes the hydrolysis of glutamine to ammonia, which is used by the large (or ammonia) chain to synthesize carbamoyl phosphate. Tetramer of heterodimers (alpha,beta)4. Requires Mg(2+) as cofactor. Mn(2+) is required as a cofactor.

The enzyme catalyses hydrogencarbonate + L-glutamine + 2 ATP + H2O = carbamoyl phosphate + L-glutamate + 2 ADP + phosphate + 2 H(+). The catalysed reaction is hydrogencarbonate + NH4(+) + 2 ATP = carbamoyl phosphate + 2 ADP + phosphate + 2 H(+). The protein operates within amino-acid biosynthesis; L-arginine biosynthesis; carbamoyl phosphate from bicarbonate: step 1/1. It functions in the pathway pyrimidine metabolism; UMP biosynthesis via de novo pathway; (S)-dihydroorotate from bicarbonate: step 1/3. Functionally, large subunit of the glutamine-dependent carbamoyl phosphate synthetase (CPSase). CPSase catalyzes the formation of carbamoyl phosphate from the ammonia moiety of glutamine, carbonate, and phosphate donated by ATP, constituting the first step of 2 biosynthetic pathways, one leading to arginine and/or urea and the other to pyrimidine nucleotides. The large subunit (synthetase) binds the substrates ammonia (free or transferred from glutamine from the small subunit), hydrogencarbonate and ATP and carries out an ATP-coupled ligase reaction, activating hydrogencarbonate by forming carboxy phosphate which reacts with ammonia to form carbamoyl phosphate. In Staphylococcus aureus (strain Mu3 / ATCC 700698), this protein is Carbamoyl phosphate synthase large chain.